Reading from the N-terminus, the 112-residue chain is MSNIYDLANELSRNLRELPEYKAVAESKKAVDADSEAKAIFTDYLAFQQELQQLAQTGQVPTQEVQDKMTSFGEKIQGNAVLSEFFNKQQQLSIYLADIERIIFDPVQDLLK.

Belongs to the UPF0342 family.

The polypeptide is UPF0342 protein SSA_1465 (Streptococcus sanguinis (strain SK36)).